A 443-amino-acid polypeptide reads, in one-letter code: Thymidine phosphorylase (443 aa).

The protein belongs to the thymidine/pyrimidine-nucleoside phosphorylase family. Homodimer.

It carries out the reaction thymidine + phosphate = 2-deoxy-alpha-D-ribose 1-phosphate + thymine. It participates in pyrimidine metabolism; dTMP biosynthesis via salvage pathway; dTMP from thymine: step 1/2. Its function is as follows. The enzymes which catalyze the reversible phosphorolysis of pyrimidine nucleosides are involved in the degradation of these compounds and in their utilization as carbon and energy sources, or in the rescue of pyrimidine bases for nucleotide synthesis. This is Thymidine phosphorylase from Shewanella sp. (strain MR-4).